The sequence spans 247 residues: Adenylyl-sulfate kinase (247 aa).

A disordered region spans residues 1 to 24 (MSQSNSDDSASSSTQQAGDGQDDV). 55 to 62 (GLSGCGKS) contributes to the ATP binding site. The Phosphoserine intermediate role is filled by Ser146.

Belongs to the APS kinase family.

The catalysed reaction is adenosine 5'-phosphosulfate + ATP = 3'-phosphoadenylyl sulfate + ADP + H(+). The protein operates within sulfur metabolism; hydrogen sulfide biosynthesis; sulfite from sulfate: step 2/3. Catalyzes the synthesis of activated sulfate. The chain is Adenylyl-sulfate kinase from Rhodopirellula baltica (strain DSM 10527 / NCIMB 13988 / SH1).